A 177-amino-acid chain; its full sequence is Large ribosomal subunit protein uL10 (177 aa).

Belongs to the universal ribosomal protein uL10 family. Part of the ribosomal stalk of the 50S ribosomal subunit. The N-terminus interacts with L11 and the large rRNA to form the base of the stalk. The C-terminus forms an elongated spine to which L12 dimers bind in a sequential fashion forming a multimeric L10(L12)X complex.

In terms of biological role, forms part of the ribosomal stalk, playing a central role in the interaction of the ribosome with GTP-bound translation factors. This chain is Large ribosomal subunit protein uL10, found in Legionella pneumophila (strain Paris).